A 159-amino-acid chain; its full sequence is UPF0262 protein TM1040_3562 (159 aa).

The disordered stretch occupies residues 1 to 21 (MSRISQIELDDRNLPPPTPEI).

Belongs to the UPF0262 family.

This chain is UPF0262 protein TM1040_3562, found in Ruegeria sp. (strain TM1040) (Silicibacter sp.).